We begin with the raw amino-acid sequence, 31 residues long: Photosystem II reaction center protein T (31 aa).

A helical membrane pass occupies residues 3–23 (SVAYILVLTMTLAVLFFAIAF).

The protein belongs to the PsbT family. In terms of assembly, PSII is composed of 1 copy each of membrane proteins PsbA, PsbB, PsbC, PsbD, PsbE, PsbF, PsbH, PsbI, PsbJ, PsbK, PsbL, PsbM, PsbT, PsbX, PsbY, PsbZ, Psb30/Ycf12, peripheral proteins PsbO, CyanoQ (PsbQ), PsbU, PsbV and a large number of cofactors. It forms dimeric complexes.

It localises to the cellular thylakoid membrane. Its function is as follows. Found at the monomer-monomer interface of the photosystem II (PS II) dimer, plays a role in assembly and dimerization of PSII. PSII is a light-driven water plastoquinone oxidoreductase, using light energy to abstract electrons from H(2)O, generating a proton gradient subsequently used for ATP formation. This is Photosystem II reaction center protein T from Rippkaea orientalis (strain PCC 8801 / RF-1) (Cyanothece sp. (strain PCC 8801)).